A 139-amino-acid chain; its full sequence is Large ribosomal subunit protein uL16 (139 aa).

Residues 1-19 show a composition bias toward basic residues; the sequence is MLIPRRVKHRKQHHPKRSG. Residues 1-25 form a disordered region; sequence MLIPRRVKHRKQHHPKRSGMSKGGT.

Belongs to the universal ribosomal protein uL16 family. In terms of assembly, part of the 50S ribosomal subunit.

Binds 23S rRNA and is also seen to make contacts with the A and possibly P site tRNAs. The polypeptide is Large ribosomal subunit protein uL16 (Streptomyces griseus subsp. griseus (strain JCM 4626 / CBS 651.72 / NBRC 13350 / KCC S-0626 / ISP 5235)).